A 259-amino-acid polypeptide reads, in one-letter code: MLFLLSPAKSLDFEKPAAPVPHTQPLFIPQAAELIDILKKKSPRQIASLMSLSDTLAGLNVARYQAWVPKFTAKNAKQAVLAFNGDVYEGLDAKSLPVDDLKWLQDHVCILSGLYGVLRPLDYMQPYRLEMGTKLANPQGKDLYQFWGAQISDYLNIRLHKNAAPVVVNLASQEYFRAVDRKALQARVLECVFQEYRGGQYKIISFYAKRARGLMARFAAEHRLSKPKQLEGFDAEGYAFDAAASEPDRLVFRRQQPLS.

This sequence belongs to the UPF0246 family.

In Albidiferax ferrireducens (strain ATCC BAA-621 / DSM 15236 / T118) (Rhodoferax ferrireducens), this protein is UPF0246 protein Rfer_2372.